The following is a 158-amino-acid chain: L-alanine exporter AlaE (158 aa).

Transmembrane regions (helical) follow at residues 23-43 (FAMV…VSGM), 53-73 (LVAI…RDAV), 92-112 (VIAY…FVGA), and 117-137 (IITA…AYGY).

It belongs to the AlaE exporter family.

The protein localises to the cell inner membrane. Its function is as follows. Exports L-alanine. The sequence is that of L-alanine exporter AlaE from Cronobacter sakazakii (strain ATCC BAA-894) (Enterobacter sakazakii).